The chain runs to 266 residues: RNA-binding protein 7 (266 aa).

G2 bears the N-acetylglycine mark. The RRM domain occupies 10 to 87; sequence RTLFVGNLET…RPIKIQFRSG (78 aa). ZCCHC8 binding stretches follow at residues 25-35 and 59-76; these read LLFELFHQAGP and HEVSVPYAMNLLNGIKLY. The segment covering 90 to 115 has biased composition (polar residues); sequence HAPQDVSLSYPQHHVGNSSPTSTSPS. The disordered stretch occupies residues 90–118; it reads HAPQDVSLSYPQHHVGNSSPTSTSPSRYE. Phosphoserine occurs at positions 136 and 137. Omega-N-methylarginine is present on R152. The segment at 162 to 266 is disordered; the sequence is SSPLDQSGFS…RDGKWRSSRH (105 aa). The segment covering 173–188 has biased composition (low complexity); that stretch reads SVQSHSHSFNQSSSSQ. A Phosphoserine modification is found at S204. A compositionally biased stretch (basic and acidic residues) spans 209–266; it reads ADRHYSREQRYTDHGSDHHYRGKRDDFFYEDRNHDDWSHDYDNRRDSSRDGKWRSSRH.

In terms of assembly, component of the nuclear exosome targeting (NEXT) complex composed of MTREX, ZCCHC8, and RBM7 that directs a subset of non-coding short-lived RNAs for exosomal degradation. Interacts with ZCCHC8 and SF3B2/SAP145. Binds to MTREX through ZCCHC8. Interacts with YWHAE and YWHAZ; these interactions are stress-dependent and RBM7 phosphorylation dependent; release RNA from the NEXT complex and may affect RNA targeting to the nuclear RNA exosomome for degradation. Interacts with MEPCE and LARP7, the core subunits of 7SK snRNP; upon genotoxic stress this interaction is enhanced, triggering the release of inactive P-TEFb complex from the core and P-TEFb complex activation. Phosphorylated at Ser-136 by MAPK14/p38-alpha-activated MAPKAPK2/MK2; this phosphorylation is stress-dependent; this phosphorylation decreases its RNA-binding capacity therefore affecting RNA nuclear exosome-mediated degradation. This phosphorylation mediates YWHAE and YWHAZ interactions. In terms of tissue distribution, ubiquitous.

The protein localises to the nucleus. The protein resides in the nucleoplasm. In terms of biological role, RNA-binding subunit of the trimeric nuclear exosome targeting (NEXT) complex, a complex that functions as an RNA exosome cofactor that directs a subset of non-coding short-lived RNAs for exosomal degradation. NEXT is involved in surveillance and turnover of aberrant transcripts and non-coding RNAs. Binds preferentially polyuridine sequences and associates with newly synthesized RNAs, including pre-mRNAs and short-lived exosome substrates such as promoter upstream transcripts (PROMPTs), enhancer RNAs (eRNAs), and 3'-extended products from small nuclear RNAs (snRNAs). Participates in several biological processes including DNA damage response (DDR) and stress response. During stress response, activation of the p38MAPK-MK2 pathway decreases RBM7-RNA-binding and subsequently the RNA exosome degradation activities, thereby modulating the turnover of non-coding transcriptome. Participates in DNA damage response (DDR), through its interaction with MEPCE and LARP7, the core subunits of 7SK snRNP complex, that release the positive transcription elongation factor b (P-TEFb) complex from the 7SK snRNP. In turn, activation of P-TEFb complex induces the transcription of P-TEFb-dependent DDR genes to promote cell viability. This chain is RNA-binding protein 7, found in Homo sapiens (Human).